Consider the following 258-residue polypeptide: Tetratricopeptide repeat protein 33 (258 aa).

TPR repeat units lie at residues 59-92 (SKRL…TPGD), 93-126 (AALY…NPHF), and 127-160 (VEAW…CPAN). The segment at 231 to 258 (SASGSENLSDRKEDKVETNDSKEFIKAR) is disordered. The span at 238-258 (LSDRKEDKVETNDSKEFIKAR) shows a compositional bias: basic and acidic residues.

The polypeptide is Tetratricopeptide repeat protein 33 (ttc33) (Xenopus laevis (African clawed frog)).